The sequence spans 742 residues: Cullin-2 (742 aa).

Residues 672-734 form the Cullin neddylation domain; the sequence is DRRYAIDAAL…RDYLERDTDN (63 aa). Residue lysine 686 forms a Glycyl lysine isopeptide (Lys-Gly) (interchain with G-Cter in NEDD8) linkage.

This sequence belongs to the cullin family. Interacts with SKIP17 and FBW2/SKIP18. Neddylated; which enhances the ubiquitination activity of E3 ubiquitin-protein ligase complexes.

Its function is as follows. Core component of multiple SCF (SKP1-CUL1-F-box protein) E3 ubiquitin-protein ligase complexes. Involved in ubiquitination and subsequent proteasomal degradation of target proteins. The polypeptide is Cullin-2 (CUL2) (Arabidopsis thaliana (Mouse-ear cress)).